Reading from the N-terminus, the 775-residue chain is Protein U58 (775 aa).

This sequence belongs to the herpesviridae UL87 family.

The polypeptide is Protein U58 (U58) (Homo sapiens (Human)).